Consider the following 292-residue polypeptide: 4-hydroxy-tetrahydrodipicolinate synthase (292 aa).

Thr45 is a binding site for pyruvate. Residue Tyr133 is the Proton donor/acceptor of the active site. Lys161 serves as the catalytic Schiff-base intermediate with substrate. Ile203 lines the pyruvate pocket.

Belongs to the DapA family. Homotetramer; dimer of dimers.

The protein resides in the cytoplasm. It carries out the reaction L-aspartate 4-semialdehyde + pyruvate = (2S,4S)-4-hydroxy-2,3,4,5-tetrahydrodipicolinate + H2O + H(+). It participates in amino-acid biosynthesis; L-lysine biosynthesis via DAP pathway; (S)-tetrahydrodipicolinate from L-aspartate: step 3/4. Its function is as follows. Catalyzes the condensation of (S)-aspartate-beta-semialdehyde [(S)-ASA] and pyruvate to 4-hydroxy-tetrahydrodipicolinate (HTPA). This chain is 4-hydroxy-tetrahydrodipicolinate synthase, found in Salmonella typhi.